We begin with the raw amino-acid sequence, 196 residues long: DnaA initiator-associating protein DiaA (196 aa).

The 163-residue stretch at L34 to D196 folds into the SIS domain.

It belongs to the SIS family. DiaA subfamily. As to quaternary structure, homotetramer; dimer of dimers.

Functionally, required for the timely initiation of chromosomal replication via direct interactions with the DnaA initiator protein. The chain is DnaA initiator-associating protein DiaA from Salmonella paratyphi A (strain ATCC 9150 / SARB42).